A 547-amino-acid polypeptide reads, in one-letter code: Puff-specific protein Bx42 (547 aa).

The SNW stretch occupies residues 177–343 (AQYIRYTPSQ…AREERAGLRN (167 aa)). A phosphoserine mark is found at serine 227 and serine 235. Disordered regions lie at residues 333–398 (RARE…ERDI) and 486–547 (QFSG…SKRD). Basic and acidic residues-rich tracts occupy residues 358 to 398 (EVRE…ERDI) and 526 to 539 (KRAE…SSHS).

Belongs to the SNW family.

It is found in the nucleus. In terms of biological role, may play a role in chromatin structure and function. The protein is Puff-specific protein Bx42 (Bx42) of Drosophila melanogaster (Fruit fly).